The chain runs to 618 residues: MKQSKMLIPTLREMPSDAQVISHALMVRAGYVRQVSAGIYAYLPLAHRTIEKFKTIMRQEFDKIGAVEMLAPALLTADLWRESGRYETYGEDLYKLKNRDKSDFILGPTHEETFTTLVRDAVKSYKQLPLNLYQIQSKYRDEKRPRNGLLRTREFIMKDGYSFHQSYDDLDVTYDAYRQAYEAIFTRAGLDFKGIIGDGGAMGGKDSQEFMAITPDRTNLDRWLVLDKSIPSLADIPEEVLEEIKAELASWLVSGEDTIAYSSESSYAANLEMATSEYKSSSKVTALDDLVEIETPNCKTIDEVAAFLDVAEHQVIKTLLFMVDHEPVLALLVGNDQINAVKLKNHLGADFLEPASEEEARAILGAGFGSLGPVHLTDGIRIVADRKVQDLANAVAGANKDGYHLTGVNPNRDFQAEYADIREVKEGETSPDRHGVLQFARGIEIGHIFKLGTRYSDSMAANILDENGRAVPIVMGCYGIGVSRILSAVIEQHARLFVSKTPKGDYRYAWGINFPKELAPFDVHLITVNVKDQEAQDLTERVEASLMAKGYDVLTDDRNERVGSKFSDSDLIGLPIRVTIGKKAAEGIVEIKIKATGDSIEVHADSLIETLDILTKDN.

This sequence belongs to the class-II aminoacyl-tRNA synthetase family. ProS type 1 subfamily. Homodimer.

It is found in the cytoplasm. The enzyme catalyses tRNA(Pro) + L-proline + ATP = L-prolyl-tRNA(Pro) + AMP + diphosphate. Its function is as follows. Catalyzes the attachment of proline to tRNA(Pro) in a two-step reaction: proline is first activated by ATP to form Pro-AMP and then transferred to the acceptor end of tRNA(Pro). As ProRS can inadvertently accommodate and process non-cognate amino acids such as alanine and cysteine, to avoid such errors it has two additional distinct editing activities against alanine. One activity is designated as 'pretransfer' editing and involves the tRNA(Pro)-independent hydrolysis of activated Ala-AMP. The other activity is designated 'posttransfer' editing and involves deacylation of mischarged Ala-tRNA(Pro). The misacylated Cys-tRNA(Pro) is not edited by ProRS. The protein is Proline--tRNA ligase of Streptococcus equi subsp. equi (strain 4047).